Reading from the N-terminus, the 261-residue chain is Carbonic anhydrase 1 (261 aa).

The residue at position 2 (alanine 2) is an N-acetylalanine. The region spanning 4–261 (PDWGYDGENG…LKGRTVKASF (258 aa)) is the Alpha-carbonic anhydrase domain. A disordered region spans residues 22 to 41 (PIANGNNQSPIDIKTSETKR). The active-site Proton donor/acceptor is histidine 65. Histidine 95, histidine 97, and histidine 120 together coordinate Zn(2+). Substrate is bound by residues threonine 200 and 200 to 201 (TH).

This sequence belongs to the alpha-carbonic anhydrase family. It depends on Zn(2+) as a cofactor.

The protein resides in the cytoplasm. The enzyme catalyses hydrogencarbonate + H(+) = CO2 + H2O. The catalysed reaction is urea = cyanamide + H2O. Inhibited by acetazolamide. Catalyzes the reversible hydration of carbon dioxide. Can hydrate cyanamide to urea. In Ovis aries (Sheep), this protein is Carbonic anhydrase 1 (CA1).